Reading from the N-terminus, the 471-residue chain is F-box only protein 3 (471 aa).

The region spanning 10-56 (PLTLESLPTDPLLLILSFLDYRDLINCCYVSRRLSQLSSHDPLWRRH) is the F-box domain. Residues 278–408 (VATTGDITVS…FHMACPTFRV (131 aa)) form the ApaG domain. The span at 419-451 (EYEEMEEEEEEEEEEDEDDDSADMDESDEDDEE) shows a compositional bias: acidic residues. The tract at residues 419 to 455 (EYEEMEEEEEEEEEEDEDDDSADMDESDEDDEEERRR) is disordered.

As to quaternary structure, part of a SCF (SKP1-cullin-F-box) protein ligase complex SCF(FBXO3) consisting of FBXO3, SKP1, CUL1 and RBX1. Interacts with PML, interaction is direct and takes place either alone or within the SCF complex. In terms of assembly, (Microbial infection) Interacts (via ApaG domain) with Rift valley fever virus NSs helical filament; this interaction forms a filamentous E3 which mediates degradation of TFIIH complex through interaction with GT2H1.

The protein resides in the nucleus. It participates in protein modification; protein ubiquitination. Substrate recognition component of the SCF (SKP1-CUL1-F-box protein)-type E3 ubiquitin ligase complex, SCF(FBXO3), which mediates the ubiquitination and subsequent proteasomal degradation of target proteins. Mediates the ubiquitination of HIPK2 and probably that of EP300, leading to rapid degradation by the proteasome. In the presence of PML, HIPK2 ubiquitination still occurs, but degradation is prevented. PML, HIPK2 and FBXO3 may act synergically to activate p53/TP53-dependent transactivation. The SCF(FBXO3) also acts as a regulator of inflammation by mediating ubiquitination and degradation of FBXL2 in response to lipopolysaccharide (LPS). The SCF(FBXO3) complex specifically recognizes FBXL2 phosphorylated at 'Thr-404' and promotes its ubiquitination. In terms of biological role, (Microbial infection) Associates with the Rift valley fever virus NSs to form a remodeled E3 ligase that triggers efficient proteasomal degradation of targeted proteins. The filamentous E3 ligase targets the TFIIH complex leading to robust inhibition of antiviral immunity and enhances viral pathogenesis. The polypeptide is F-box only protein 3 (Homo sapiens (Human)).